The primary structure comprises 617 residues: METKKGSLDWKNLQYDLQPWIKEAIASLGFPTMTPVQAATIPLLSGNKDVVVEAVTGSGKTLAFAIPVLQKVSNRLYDSQEEGEAPEKVKQGHMLAIVLSPTRELASQIQSVFNNVIEYLPEDKIPIKTQLLVGSLSTVRDDLDRFLKDKPHILIATPGRMLDFMSSQYVKMNSVEIAILDEADKLLDFSFEKDVVNILKRLPKQRRTGLFSATISAAGNTIFRAGMNNPVKVAVKSKSTTANSAPSALHISYLMIEPEKKITTLIKLLHDYRYKKCIVYFPTCTSVKHFYSIFQKIVNGNDNTESFKFYSLHGQLATKPRLRTLQSFTDGDVALNKHILMTTDVAARGIDIPDVDLVIQLDPPTDPDVFLHRCGRTGRANKVGRAIVMLNDGSRELDYVDFMEVKGVAMQEMPTPDLNQSDHQQFQDKLRKYMLDDRARHEIAIKSYVGFVRYYTKHMATSIFRYQTLDYLGIAKMYGLLRLPKMPESKYIPNDNMPDDGWLGEPIDMDKYSYADNQQEASRLENLNAEKIKKIADAKRRKELKVKNEAWSSKTETKETKQERREKMKRKREAIEKQIMEESSDDEETKVDWKDIVKSNKKKKANSGSMQGSFDDL.

A Q motif motif is present at residues 10 to 38; the sequence is WKNLQYDLQPWIKEAIASLGFPTMTPVQA. The region spanning 41–233 is the Helicase ATP-binding domain; it reads IPLLSGNKDV…RAGMNNPVKV (193 aa). Residue 54-61 coordinates ATP; sequence AVTGSGKT. The DEAD box signature appears at 181–184; the sequence is DEAD. The 161-residue stretch at 261–421 folds into the Helicase C-terminal domain; sequence KITTLIKLLH…EMPTPDLNQS (161 aa). Residues 515 to 585 are a coiled coil; the sequence is ADNQQEASRL…EKQIMEESSD (71 aa). The segment at 547–617 is disordered; sequence KNEAWSSKTE…GSMQGSFDDL (71 aa). Basic and acidic residues predominate over residues 555–566; sequence TETKETKQERRE. Over residues 608-617 the composition is skewed to polar residues; the sequence is GSMQGSFDDL.

It belongs to the DEAD box helicase family. DDX55/SPB4 subfamily. Component of pre-60S ribosomal complexes.

It is found in the nucleus. The protein localises to the nucleolus. It catalyses the reaction ATP + H2O = ADP + phosphate + H(+). Functionally, ATP-binding RNA helicase involved in the biogenesis of 60S ribosomal subunits. Binds 90S pre-ribosomal particles and dissociates from pre-60S ribosomal particles after processing of 27SB pre-rRNA. Required for the normal formation of 18S rRNA through the processing of pre-rRNAs at sites A0, A1 and A2, and the normal formation of 25S and 5.8S rRNAs through the processing of pre-rRNAs at sites C1 and C2. The sequence is that of ATP-dependent rRNA helicase SPB4 from Scheffersomyces stipitis (strain ATCC 58785 / CBS 6054 / NBRC 10063 / NRRL Y-11545) (Yeast).